A 506-amino-acid polypeptide reads, in one-letter code: Histidine--tRNA ligase, mitochondrial (506 aa).

The transit peptide at 1 to 33 directs the protein to the mitochondrion; that stretch reads MPQLGLLPGRAWTVLLGLLRPPPGALCIRAVRS. Ser-67 is subject to Phosphoserine. Residues 131–133, Arg-158, Gln-174, Asp-178, Arg-327, and 331–332 contribute to the L-histidine site; these read DLT and YY. Lys-444 is subject to N6-acetyllysine.

It belongs to the class-II aminoacyl-tRNA synthetase family. As to quaternary structure, homodimer.

The protein localises to the mitochondrion. The enzyme catalyses tRNA(His) + L-histidine + ATP = L-histidyl-tRNA(His) + AMP + diphosphate + H(+). In terms of biological role, mitochondrial aminoacyl-tRNA synthetase that catalyzes the ATP-dependent ligation of histidine to the 3'-end of its cognate tRNA, via the formation of an aminoacyl-adenylate intermediate (His-AMP). This chain is Histidine--tRNA ligase, mitochondrial (HARS2), found in Bos taurus (Bovine).